A 251-amino-acid polypeptide reads, in one-letter code: Aspartate/glutamate leucyltransferase (251 aa).

It belongs to the R-transferase family. Bpt subfamily.

It is found in the cytoplasm. It catalyses the reaction N-terminal L-glutamyl-[protein] + L-leucyl-tRNA(Leu) = N-terminal L-leucyl-L-glutamyl-[protein] + tRNA(Leu) + H(+). The catalysed reaction is N-terminal L-aspartyl-[protein] + L-leucyl-tRNA(Leu) = N-terminal L-leucyl-L-aspartyl-[protein] + tRNA(Leu) + H(+). In terms of biological role, functions in the N-end rule pathway of protein degradation where it conjugates Leu from its aminoacyl-tRNA to the N-termini of proteins containing an N-terminal aspartate or glutamate. This is Aspartate/glutamate leucyltransferase from Xanthomonas axonopodis pv. citri (strain 306).